A 197-amino-acid chain; its full sequence is ATP-dependent Clp protease proteolytic subunit (197 aa).

Residue Ser-98 is the Nucleophile of the active site. The active site involves His-123.

The protein belongs to the peptidase S14 family. As to quaternary structure, fourteen ClpP subunits assemble into 2 heptameric rings which stack back to back to give a disk-like structure with a central cavity, resembling the structure of eukaryotic proteasomes.

It localises to the cytoplasm. The catalysed reaction is Hydrolysis of proteins to small peptides in the presence of ATP and magnesium. alpha-casein is the usual test substrate. In the absence of ATP, only oligopeptides shorter than five residues are hydrolyzed (such as succinyl-Leu-Tyr-|-NHMec, and Leu-Tyr-Leu-|-Tyr-Trp, in which cleavage of the -Tyr-|-Leu- and -Tyr-|-Trp bonds also occurs).. Cleaves peptides in various proteins in a process that requires ATP hydrolysis. Has a chymotrypsin-like activity. Plays a major role in the degradation of misfolded proteins. The sequence is that of ATP-dependent Clp protease proteolytic subunit from Haemophilus ducreyi (strain 35000HP / ATCC 700724).